The chain runs to 633 residues: Threonine--tRNA ligase (633 aa).

Residues 1 to 61 form the TGS domain; that stretch reads MINITLPDGS…DHDASLRIIT (61 aa). The catalytic stretch occupies residues 243-534; the sequence is DHRRIGKQQD…LIEHHAGQFP (292 aa). Zn(2+) is bound by residues cysteine 334, histidine 385, and histidine 511.

It belongs to the class-II aminoacyl-tRNA synthetase family. In terms of assembly, homodimer. Requires Zn(2+) as cofactor.

The protein resides in the cytoplasm. The enzyme catalyses tRNA(Thr) + L-threonine + ATP = L-threonyl-tRNA(Thr) + AMP + diphosphate + H(+). Functionally, catalyzes the attachment of threonine to tRNA(Thr) in a two-step reaction: L-threonine is first activated by ATP to form Thr-AMP and then transferred to the acceptor end of tRNA(Thr). Also edits incorrectly charged L-seryl-tRNA(Thr). This Stenotrophomonas maltophilia (strain R551-3) protein is Threonine--tRNA ligase.